Here is a 208-residue protein sequence, read N- to C-terminus: Probable nicotinate-nucleotide adenylyltransferase (208 aa).

Belongs to the NadD family.

The catalysed reaction is nicotinate beta-D-ribonucleotide + ATP + H(+) = deamido-NAD(+) + diphosphate. It participates in cofactor biosynthesis; NAD(+) biosynthesis; deamido-NAD(+) from nicotinate D-ribonucleotide: step 1/1. Catalyzes the reversible adenylation of nicotinate mononucleotide (NaMN) to nicotinic acid adenine dinucleotide (NaAD). The sequence is that of Probable nicotinate-nucleotide adenylyltransferase from Nostoc sp. (strain PCC 7120 / SAG 25.82 / UTEX 2576).